We begin with the raw amino-acid sequence, 116 residues long: Propanediol dehydratase-reactivating factor small subunit (116 aa).

Glu31 contributes to the Mg(2+) binding site.

It belongs to the DdrB/PduH family. Forms a heterotetramer PduG(2)/PduH(2). Mg(2+) serves as cofactor.

It is found in the bacterial microcompartment. It catalyses the reaction ATP + H2O = ADP + phosphate + H(+). It functions in the pathway polyol metabolism; 1,2-propanediol degradation. Functionally, small subunit of the propanediol dehydratase-reactivating factor (DDR), which reactivates suicidally inhibited adenosylcobalamin-dependent propanediol dehydratase (diol dehydratase, DDH) found in the bacterial microcompartment (BMC) dedicated to 1,2-propanediol (1,2-PD) degradation. Reactivates inactivated DDH in the presence of ATP, Mg(2+) and free adenosylcobalamin (AdoCbl), by mediating the exchange of the tightly bound damaged cofactor AdoCbl for a free intact one. The 1,2-PD-specific bacterial microcompartment (BMC) concentrates low levels of 1,2-PD catabolic enzymes, concentrates volatile reaction intermediates thus enhancing pathway flux and keeps the level of toxic, mutagenic propionaldehyde low. The protein is Propanediol dehydratase-reactivating factor small subunit of Salmonella typhimurium (strain LT2 / SGSC1412 / ATCC 700720).